Here is a 179-residue protein sequence, read N- to C-terminus: Interleukin-22b (179 aa).

An N-terminal signal peptide occupies residues 1–33 (MAVLQKSMSFSLMGTLAASCLLLIALWAQEANA). Disulfide bonds link C40/C132 and C89/C178. N-linked (GlcNAc...) asparagine glycans are attached at residues N54, N68, and N97.

Belongs to the IL-10 family.

It localises to the secreted. Its function is as follows. Cytokine that contributes to the inflammatory response in vivo. In Mus musculus (Mouse), this protein is Interleukin-22b.